A 289-amino-acid chain; its full sequence is Acetyl-coenzyme A carboxylase carboxyl transferase subunit beta (289 aa).

The CoA carboxyltransferase N-terminal domain occupies 24–289 (LWIKCPESGE…NSPRRAPIPA (266 aa)).

It belongs to the AccD/PCCB family. As to quaternary structure, acetyl-CoA carboxylase is a heterohexamer composed of biotin carboxyl carrier protein (AccB), biotin carboxylase (AccC) and two subunits each of ACCase subunit alpha (AccA) and ACCase subunit beta (AccD).

It is found in the cytoplasm. The catalysed reaction is N(6)-carboxybiotinyl-L-lysyl-[protein] + acetyl-CoA = N(6)-biotinyl-L-lysyl-[protein] + malonyl-CoA. The protein operates within lipid metabolism; malonyl-CoA biosynthesis; malonyl-CoA from acetyl-CoA: step 1/1. Its function is as follows. Component of the acetyl coenzyme A carboxylase (ACC) complex. Biotin carboxylase (BC) catalyzes the carboxylation of biotin on its carrier protein (BCCP) and then the CO(2) group is transferred by the transcarboxylase to acetyl-CoA to form malonyl-CoA. The chain is Acetyl-coenzyme A carboxylase carboxyl transferase subunit beta from Beijerinckia indica subsp. indica (strain ATCC 9039 / DSM 1715 / NCIMB 8712).